Here is a 551-residue protein sequence, read N- to C-terminus: MKANHIRILLLVTIAIMFISLMGKWEQTFPADNTKQQTSATQNNSHYDNADSSTNTDVTTTDAKSSLAKETNFSKYDNAKSITINTGVFKDVKVSLLDGAIISASLKDYSISLDDKTPMSLLTDKSGSEYIAKSTIVVNKQPISVNFEDQGIKIENGKQILTLTGSADGLQITRTYTFDDTKYNISVSQNIKNTTSAPVNVIVDDSFARGFDPAGDSFSLLNAHSYTFTGVAYSTAKDSFRKESFKDISKTNGQPTVINSDGQGWVAFLQHYFVSAWIPQSTNAKIYYKNLNGDVFEAGAFTGATIAPNQSENISSILYTGPIIKANLVDLAPNLEKTLDYGMLSFFSEIIFWVMNHIHSLVGNWGLAIILVTCLIKLIFYPLSAKSYRSMAKMRMLQPRIKRLQETYKDDRQALGKKMMELYKEEKVNPLSGCLPMLIQIPIFISLYWVLLESVELRQAPFIFWIHDLSMKDPYFVLPVLMGLSMFLQQKLSPAPADPMQAKVMMFLPVIFTFLFASFPSGLVLYWLTNNLISISQQWIITRHYQATHKK.

A helical membrane pass occupies residues 3-23 (ANHIRILLLVTIAIMFISLMG). Residues 33–47 (NTKQQTSATQNNSHY) show a composition bias toward polar residues. The disordered stretch occupies residues 33–59 (NTKQQTSATQNNSHYDNADSSTNTDVT). The segment covering 50–59 (ADSSTNTDVT) has biased composition (low complexity). The next 3 helical transmembrane spans lie at 361–381 (LVGNWGLAIILVTCLIKLIFY), 431–451 (LSGCLPMLIQIPIFISLYWVL), and 504–524 (VMMFLPVIFTFLFASFPSGLV).

This sequence belongs to the OXA1/ALB3/YidC family. Type 1 subfamily. As to quaternary structure, interacts with the Sec translocase complex via SecD. Specifically interacts with transmembrane segments of nascent integral membrane proteins during membrane integration.

It localises to the cell inner membrane. In terms of biological role, required for the insertion and/or proper folding and/or complex formation of integral membrane proteins into the membrane. Involved in integration of membrane proteins that insert both dependently and independently of the Sec translocase complex, as well as at least some lipoproteins. Aids folding of multispanning membrane proteins. The polypeptide is Membrane protein insertase YidC (Francisella tularensis subsp. mediasiatica (strain FSC147)).